Reading from the N-terminus, the 153-residue chain is Two-component response regulator ARR17 (153 aa).

The region spanning 21–149 (HVLAVDDNLI…DVEKLKCHLL (129 aa)) is the Response regulatory domain. Residue Asp82 is modified to 4-aspartylphosphate.

It belongs to the ARR family. Type-A subfamily. Two-component system major event consists of a His-to-Asp phosphorelay between a sensor histidine kinase (HK) and a response regulator (RR). In plants, the His-to-Asp phosphorelay involves an additional intermediate named Histidine-containing phosphotransfer protein (HPt). This multistep phosphorelay consists of a His-Asp-His-Asp sequential transfer of a phosphate group between first a His and an Asp of the HK protein, followed by the transfer to a conserved His of the HPt protein and finally the transfer to an Asp in the receiver domain of the RR protein.

The protein localises to the nucleus. Functions as a response regulator involved in His-to-Asp phosphorelay signal transduction system. Phosphorylation of the Asp residue in the receiver domain activates the ability of the protein to promote the transcription of target genes. Type-A response regulators seem to act as negative regulators of the cytokinin signaling. The protein is Two-component response regulator ARR17 (ARR17) of Arabidopsis thaliana (Mouse-ear cress).